We begin with the raw amino-acid sequence, 411 residues long: Peptidase T (411 aa).

H79 is a Zn(2+) binding site. The active site involves D81. Zn(2+) is bound at residue D142. Catalysis depends on E176, which acts as the Proton acceptor. Residues E177, D199, and H381 each contribute to the Zn(2+) site.

The protein belongs to the peptidase M20B family. Requires Zn(2+) as cofactor.

It is found in the cytoplasm. It carries out the reaction Release of the N-terminal residue from a tripeptide.. Cleaves the N-terminal amino acid of tripeptides. This chain is Peptidase T, found in Geobacillus thermodenitrificans (strain NG80-2).